The following is a 457-amino-acid chain: Squalene epoxidase erg1 (457 aa).

FAD contacts are provided by residues 15–16 (IT), 35–36 (ER), R43, R114, V130, D293, and M306. A run of 3 helical transmembrane segments spans residues 347–364 (GYSF…KLFT), 409–429 (FYAV…ALLM), and 433–453 (IIES…YILS).

It belongs to the squalene monooxygenase family. The cofactor is FAD.

It is found in the microsome membrane. Its subcellular location is the endoplasmic reticulum membrane. The protein resides in the vacuole membrane. The catalysed reaction is squalene + reduced [NADPH--hemoprotein reductase] + O2 = (S)-2,3-epoxysqualene + oxidized [NADPH--hemoprotein reductase] + H2O + H(+). The protein operates within terpene metabolism; lanosterol biosynthesis; lanosterol from farnesyl diphosphate: step 2/3. It participates in steroid metabolism; ergosterol biosynthesis. With respect to regulation, activity is blocked by the allylamine class antifungal terbinafine. In terms of biological role, squalene epoxidase; part of the third module of ergosterol biosynthesis pathway that includes by the late steps of the pathway. Erg1 catalyzes the epoxidation of squalene into 2,3-epoxysqualene. The third module or late pathway involves the ergosterol synthesis itself through consecutive reactions that mainly occur in the endoplasmic reticulum (ER) membrane. Firstly, the squalene synthase erg9 catalyzes the condensation of 2 farnesyl pyrophosphate moieties to form squalene, which is the precursor of all steroids. Secondly, squalene is converted into lanosterol by the consecutive action of the squalene epoxidase erg1 and the lanosterol synthase erg7. The lanosterol 14-alpha-demethylase erg11/cyp1 catalyzes C14-demethylation of lanosterol to produce 4,4'-dimethyl cholesta-8,14,24-triene-3-beta-ol. In the next steps, a complex process involving various demethylation, reduction and desaturation reactions catalyzed by the C-14 reductase erg24 and the C-4 demethylation complex erg25-erg26-erg27 leads to the production of zymosterol. Erg28 likely functions in the C-4 demethylation complex reaction by tethering erg26 and Erg27 to the endoplasmic reticulum or to facilitate interaction between these proteins. Then, the sterol 24-C-methyltransferase erg6 catalyzes the methyl transfer from S-adenosyl-methionine to the C-24 of zymosterol to form fecosterol. The C-8 sterol isomerase erg2 catalyzes the reaction which results in unsaturation at C-7 in the B ring of sterols and thus converts fecosterol to episterol. The sterol-C5-desaturases erg31 and erg32 then catalyze the introduction of a C-5 double bond in the B ring to produce 5-dehydroepisterol. The C-22 sterol desaturase erg5 further converts 5-dehydroepisterol into ergosta-5,7,22,24(28)-tetraen-3beta-ol by forming the C-22(23) double bond in the sterol side chain. Finally, ergosta-5,7,22,24(28)-tetraen-3beta-ol is substrate of the C-24(28) sterol reductase erg4 to produce ergosterol. In the genus Schizosaccharomyces, a second route exists between lanosterol and fecosterol, via the methylation of lanosterol to eburicol by erg6, followed by C14-demethylation by erg11/cyp1 and C4-demethylation by the demethylation complex erg25-erg26-erg27. This Schizosaccharomyces pombe (strain 972 / ATCC 24843) (Fission yeast) protein is Squalene epoxidase erg1.